A 336-amino-acid chain; its full sequence is Terephthalate 1,2-dioxygenase, reductase component 2 (336 aa).

The 2Fe-2S ferredoxin-type domain occupies His-3–Arg-91. [2Fe-2S] cluster is bound by residues Cys-37, Cys-42, Cys-45, and Cys-75. The FAD-binding FR-type domain maps to Arg-98 to Lys-197.

Monomer. Part of a multicomponent enzyme system composed of a reductase (TphA1I or TphA1II) and a two-subunit oxygenase component (TphA2I or TphA2II and TphA3I or TphA3II). The cofactor is FAD. It depends on [2Fe-2S] cluster as a cofactor.

The catalysed reaction is terephthalate + NADH + O2 + H(+) = (3S,4R)-3,4-dihydroxycyclohexa-1,5-diene-1,4-dicarboxylate + NAD(+). Its function is as follows. Component of the terephthalate 1,2-dioxygenase multicomponent enzyme system which catalyzes the dioxygenation of terephthalate (TER/TPA) to 1,2-dihydroxy-3,5-cyclohexadiene-1,4-dicarboxylic acid (DCD). TphA1 probably reduces TphA2A3. It can also use 2,5-dicarboxypyridine (PDC) and 1,4-napthalenedicarboxylic acid (NDC) as substrates, and preferentially uses NADPH which is the physiological electron donor. The polypeptide is Terephthalate 1,2-dioxygenase, reductase component 2 (tphA1II) (Comamonas sp).